The sequence spans 1005 residues: DNA polymerase (1005 aa).

Belongs to the DNA polymerase type-B family. Interacts with OPG148. Component of the Uracil-DNA glycosylase(UDG)-OPG148-polymerase complex; OPG148 and OPG116/UDG form a heterodimeric processivity factor that associates with OPG071 to form the processive polymerase holoenzyme.

It carries out the reaction DNA(n) + a 2'-deoxyribonucleoside 5'-triphosphate = DNA(n+1) + diphosphate. Its function is as follows. Catalyzes DNA synthesis. Acquires processivity by associating with a heterodimeric processivity factor comprised of the viral OPG148 and OPG116 proteins, thereby forming the DNA polymerase holoenzyme. Displays 3'- to 5' exonuclease activity. Might participate in viral DNA recombination. Does not perform OPG116/D4synthesis across an abasic site. In Variola virus (isolate Human/India/Ind3/1967) (VARV), this protein is DNA polymerase (OPG071).